Consider the following 93-residue polypeptide: MQITDVRVRRVSKEGKMKAVVSITLDNEFVVHDIKVIEGEKGLFIAMPSRKAGDGEYRDIAHPINSITRDKIQSIILEKYELAALEGNIEEAE.

The protein belongs to the SpoVG family.

In terms of biological role, could be involved in septation. The protein is Putative septation protein SpoVG of Lachnoclostridium phytofermentans (strain ATCC 700394 / DSM 18823 / ISDg) (Clostridium phytofermentans).